A 259-amino-acid polypeptide reads, in one-letter code: Thiazole synthase (259 aa).

Catalysis depends on Lys-99, which acts as the Schiff-base intermediate with DXP. 1-deoxy-D-xylulose 5-phosphate-binding positions include Gly-160, 187–188 (AG), and 209–210 (NT).

Belongs to the ThiG family. In terms of assembly, homotetramer. Forms heterodimers with either ThiH or ThiS.

It localises to the cytoplasm. It carries out the reaction [ThiS sulfur-carrier protein]-C-terminal-Gly-aminoethanethioate + 2-iminoacetate + 1-deoxy-D-xylulose 5-phosphate = [ThiS sulfur-carrier protein]-C-terminal Gly-Gly + 2-[(2R,5Z)-2-carboxy-4-methylthiazol-5(2H)-ylidene]ethyl phosphate + 2 H2O + H(+). It functions in the pathway cofactor biosynthesis; thiamine diphosphate biosynthesis. In terms of biological role, catalyzes the rearrangement of 1-deoxy-D-xylulose 5-phosphate (DXP) to produce the thiazole phosphate moiety of thiamine. Sulfur is provided by the thiocarboxylate moiety of the carrier protein ThiS. In vitro, sulfur can be provided by H(2)S. In Solibacter usitatus (strain Ellin6076), this protein is Thiazole synthase.